Reading from the N-terminus, the 428-residue chain is Adenylosuccinate synthetase (428 aa).

Residues 12 to 18 (GDEGKGK) and 40 to 42 (GHT) contribute to the GTP site. Asp13 (proton acceptor) is an active-site residue. Residues Asp13 and Gly40 each contribute to the Mg(2+) site. Residues 13–16 (DEGK), 38–41 (NAGH), Thr128, Arg142, Gln223, Thr238, and Arg302 contribute to the IMP site. The active-site Proton donor is the His41. 298 to 304 (VTTGRPR) contacts substrate. GTP contacts are provided by residues Arg304, 330–332 (KLD), and 412–414 (GVG).

Belongs to the adenylosuccinate synthetase family. In terms of assembly, homodimer. Mg(2+) is required as a cofactor.

It localises to the cytoplasm. The catalysed reaction is IMP + L-aspartate + GTP = N(6)-(1,2-dicarboxyethyl)-AMP + GDP + phosphate + 2 H(+). The protein operates within purine metabolism; AMP biosynthesis via de novo pathway; AMP from IMP: step 1/2. Its function is as follows. Plays an important role in the de novo pathway of purine nucleotide biosynthesis. Catalyzes the first committed step in the biosynthesis of AMP from IMP. This Halothermothrix orenii (strain H 168 / OCM 544 / DSM 9562) protein is Adenylosuccinate synthetase.